A 418-amino-acid chain; its full sequence is MKETITKQLIAVQQASREIITLTDETINSLLCALADSIPSHQEAILQANQKDIERMDPADPMVDRLLLNASRLDAIAADIRNVASLPSPLDALLEERVLPNGLNLKKVTVPIGVIGIIYEARPNVTFDVFALCLKSGNATVLKGGSDAMYSNIAIVELIHSVLKQHGINPDTLYLLPAEREAAAVMLNAVGYIDMIIPRGSQKLIDFVRNNAKVPVIETGAGIVHTYFDKSGDLDLGKHIIFNAKTRRPSVCNALDTLVIHQERLADLPALVEPLQEKQVMLFADEAAFQALQGSYPDDLLHQAEPEHFGTEFLSLKMSVKTVSSLEEALEHITRYSSRHSEAIIATDPETTATFLKRVDAAVVYANTSTAFTDGAQFGLGAEIGISTQKLHARGPMALKELTTYKWIIEGNGQTRPA.

It belongs to the gamma-glutamyl phosphate reductase family.

Its subcellular location is the cytoplasm. The enzyme catalyses L-glutamate 5-semialdehyde + phosphate + NADP(+) = L-glutamyl 5-phosphate + NADPH + H(+). The protein operates within amino-acid biosynthesis; L-proline biosynthesis; L-glutamate 5-semialdehyde from L-glutamate: step 2/2. In terms of biological role, catalyzes the NADPH-dependent reduction of L-glutamate 5-phosphate into L-glutamate 5-semialdehyde and phosphate. The product spontaneously undergoes cyclization to form 1-pyrroline-5-carboxylate. In Pelodictyon phaeoclathratiforme (strain DSM 5477 / BU-1), this protein is Gamma-glutamyl phosphate reductase.